We begin with the raw amino-acid sequence, 841 residues long: Chitin synthase 1 (841 aa).

Positions 1–13 (MNPGQKQEHDQYP) are enriched in basic and acidic residues. Residues 1-98 (MNPGQKQEHD…YGEAPRRQPR (98 aa)) are disordered. A compositionally biased stretch (pro residues) spans 76 to 85 (PPQPMGPPSP). The next 9 membrane-spanning stretches (helical) occupy residues 302-322 (WFFQ…IDVG), 385-405 (SVFG…FTAL), 526-546 (LIFS…LTSA), 564-584 (ILHT…FILA), 602-622 (FFAI…VVGV), 644-664 (NIII…FLFF), 673-693 (FIQY…YAFC), 778-798 (VISW…ENIL), and 816-836 (LWSV…YLIF).

This sequence belongs to the chitin synthase family.

The protein localises to the cell membrane. It carries out the reaction [(1-&gt;4)-N-acetyl-beta-D-glucosaminyl](n) + UDP-N-acetyl-alpha-D-glucosamine = [(1-&gt;4)-N-acetyl-beta-D-glucosaminyl](n+1) + UDP + H(+). In terms of biological role, polymerizes chitin, a structural polymer of the cell wall and septum, by transferring the sugar moiety of UDP-GlcNAc to the non-reducing end of the growing chitin polymer. The polypeptide is Chitin synthase 1 (chs1) (Phycomyces blakesleeanus (strain ATCC 8743b / DSM 1359 / FGSC 10004 / NBRC 33097 / NRRL 1555)).